Consider the following 66-residue polypeptide: Large ribosomal subunit protein bL33c (66 aa).

This sequence belongs to the bacterial ribosomal protein bL33 family.

Its subcellular location is the plastid. It is found in the chloroplast. This is Large ribosomal subunit protein bL33c from Cryptomeria japonica (Japanese cedar).